A 1153-amino-acid polypeptide reads, in one-letter code: Integrin alpha-M (1153 aa).

An N-terminal signal peptide occupies residues 1 to 16; that stretch reads MTLKALLVTALALCHG. Topologically, residues 17-1105 are extracellular; the sequence is FNLDTEHPMT…TKVEPYEVHN (1089 aa). 2 FG-GAP repeats span residues 18 to 75 and 76 to 135; these read NLDT…RCHP and IPLQ…RPPQ. Residue Asn-58 is glycosylated (N-linked (GlcNAc...) asparagine). Cys-66 and Cys-73 form a disulfide bridge. N-linked (GlcNAc...) asparagine glycosylation occurs at Asn-86. An intrachain disulfide couples Cys-105 to Cys-123. A VWFA domain is found at 164–338; sequence IDFQKMKEFV…QEKIFAIEGT (175 aa). FG-GAP repeat units follow at residues 339–390, 391–442, 443–503, 506–564, and 569–629; these read QTGS…VTFI, NTTR…FGTW, EPHT…RARW, EALL…ASLS, and HRII…FSPK. Asn-391 carries an N-linked (GlcNAc...) asparagine glycan. The Ca(2+) site is built by Asp-465, Asp-467, Asp-469, Asn-471, Asn-473, Asp-529, Asn-531, Asp-533, Asp-537, Asp-592, Asp-596, and Asp-600. Cys-654 and Cys-711 form a disulfide bridge. 10 N-linked (GlcNAc...) asparagine glycosylation sites follow: Asn-696, Asn-734, Asn-772, Asn-801, Asn-881, Asn-907, Asn-941, Asn-980, Asn-994, and Asn-1022. A disulfide bridge connects residues Cys-770 and Cys-776. 2 disulfide bridges follow: Cys-999/Cys-1023 and Cys-1028/Cys-1033. Residues Asn-1045, Asn-1051, and Asn-1076 are each glycosylated (N-linked (GlcNAc...) asparagine). A helical membrane pass occupies residues 1106–1129; the sequence is PVPLIVGSSIGGLVLLALITAGLY. Topologically, residues 1130–1153 are cytoplasmic; the sequence is KLGFFKRQYKDMMNEAAPQDAPPQ. The GFFKR motif signature appears at 1132-1136; sequence GFFKR.

This sequence belongs to the integrin alpha chain family. In terms of assembly, heterodimer of an alpha and a beta subunit. ITGAM associates with ITGB2. Found in a complex with CD177 and ITGB2/CD18. Interacts with JAM3. Interacts with THBD. Interacts with complement factor H/CFH; this interaction mediates adhesion of neutrophils to pathogens leading to pathogen clearance. Interacts with TMEM268; this interaction inhibits ITGAM degradation via the endosome-lysosome pathway. In terms of tissue distribution, predominantly expressed in monocytes and granulocytes. Expressed in a subset of peritoneal mast cells. Expressed in microglia (at protein level).

It localises to the cell membrane. The protein resides in the membrane raft. Functionally, integrin ITGAM/ITGB2 is implicated in various adhesive interactions of monocytes, macrophages and granulocytes as well as in mediating the uptake of complement-coated particles and pathogens. It is identical with CR-3, the receptor for the iC3b fragment of the third complement component. It probably recognizes the R-G-D peptide in C3b. Integrin ITGAM/ITGB2 is also a receptor for fibrinogen, factor X and ICAM1. It recognizes P1 and P2 peptides of fibrinogen gamma chain. Regulates neutrophil migration. In association with beta subunit ITGB2/CD18, required for CD177-PRTN3-mediated activation of TNF primed neutrophils. May regulate phagocytosis-induced apoptosis in extravasated neutrophils. May play a role in mast cell development. Required with TYROBP/DAP12 in microglia to control production of microglial superoxide ions which promote the neuronal apoptosis that occurs during brain development. The chain is Integrin alpha-M (Itgam) from Mus musculus (Mouse).